We begin with the raw amino-acid sequence, 34 residues long: MSDIN-like toxin proprotein 7 (34 aa).

The propeptide occupies methionine 1–proline 10. Residues alanine 11–proline 17 constitute a cross-link (cyclopeptide (Ala-Pro)). A propeptide spanning residues cysteine 18–cysteine 34 is cleaved from the precursor.

The protein belongs to the MSDIN fungal toxin family. Post-translationally, processed by the macrocyclase-peptidase enzyme POPB to yield a toxic cyclic heptapeptide. POPB first removes 10 residues from the N-terminus. Conformational trapping of the remaining peptide forces the enzyme to release this intermediate rather than proceed to macrocyclization. The enzyme rebinds the remaining peptide in a different conformation and catalyzes macrocyclization of the N-terminal 7 residues. As to expression, expressed in basidiocarps.

Its function is as follows. Probable toxin that belongs to the MSDIN-like toxin family responsible for a large number of food poisoning cases and deaths. This is MSDIN-like toxin proprotein 7 from Amanita exitialis (Guangzhou destroying angel).